The chain runs to 338 residues: Anthranilate phosphoribosyltransferase (338 aa).

Residues Gly-81, 84-85 (GD), Thr-89, 91-94 (NIST), 109-117 (KHGNRGVSS), and Ser-121 contribute to the 5-phospho-alpha-D-ribose 1-diphosphate site. Gly-81 contributes to the anthranilate binding site. A Mg(2+)-binding site is contributed by Ser-93. An anthranilate-binding site is contributed by Asn-112. Anthranilate is bound at residue Arg-167. The Mg(2+) site is built by Asp-225 and Glu-226.

It belongs to the anthranilate phosphoribosyltransferase family. Homodimer. Mg(2+) is required as a cofactor.

It carries out the reaction N-(5-phospho-beta-D-ribosyl)anthranilate + diphosphate = 5-phospho-alpha-D-ribose 1-diphosphate + anthranilate. Its pathway is amino-acid biosynthesis; L-tryptophan biosynthesis; L-tryptophan from chorismate: step 2/5. Functionally, catalyzes the transfer of the phosphoribosyl group of 5-phosphorylribose-1-pyrophosphate (PRPP) to anthranilate to yield N-(5'-phosphoribosyl)-anthranilate (PRA). The sequence is that of Anthranilate phosphoribosyltransferase from Methanoculleus marisnigri (strain ATCC 35101 / DSM 1498 / JR1).